The sequence spans 426 residues: Gamma-glutamyl phosphate reductase (426 aa).

This sequence belongs to the gamma-glutamyl phosphate reductase family.

The protein resides in the cytoplasm. It catalyses the reaction L-glutamate 5-semialdehyde + phosphate + NADP(+) = L-glutamyl 5-phosphate + NADPH + H(+). Its pathway is amino-acid biosynthesis; L-proline biosynthesis; L-glutamate 5-semialdehyde from L-glutamate: step 2/2. Catalyzes the NADPH-dependent reduction of L-glutamate 5-phosphate into L-glutamate 5-semialdehyde and phosphate. The product spontaneously undergoes cyclization to form 1-pyrroline-5-carboxylate. In Delftia acidovorans (strain DSM 14801 / SPH-1), this protein is Gamma-glutamyl phosphate reductase.